The primary structure comprises 374 residues: Probable quinol oxidase subunit 2 (374 aa).

Positions 1–19 (MSKFKSLLLMFGTLILLSG) are cleaved as a signal peptide. A lipid anchor (N-palmitoyl cysteine) is attached at Cys-20. Cys-20 carries the S-diacylglycerol cysteine lipid modification. Transmembrane regions (helical) follow at residues 43–63 (SIIFMLVIVAVVLTMFAIFIF) and 82–102 (IETIWFVVPIIIVIALSIPTV). Positions 321-374 (MKPMILGNNDPYDNEFKKEEDHNSKEMEKISKSAKDENASKFGSKADNDHGGGH) are disordered. Residues 334–374 (NEFKKEEDHNSKEMEKISKSAKDENASKFGSKADNDHGGGH) show a composition bias toward basic and acidic residues.

The protein belongs to the cytochrome c oxidase subunit 2 family.

It localises to the cell membrane. The catalysed reaction is 2 a quinol + O2 = 2 a quinone + 2 H2O. In terms of biological role, catalyzes quinol oxidation with the concomitant reduction of oxygen to water. Subunit II transfers the electrons from a quinol to the binuclear center of the catalytic subunit I. The chain is Probable quinol oxidase subunit 2 (qoxA) from Staphylococcus haemolyticus (strain JCSC1435).